A 242-amino-acid polypeptide reads, in one-letter code: E3 ubiquitin-protein ligase AIRP2 (242 aa).

The RING-type zinc finger occupies 146–184 (CGICLEIRNKVVLPTCNHSMCINCYRNWRARSQSCPFCR).

Interacts with ATP1/SDIRIP1. As to expression, expressed in germinating seeds, flower organs and siliques.

Its subcellular location is the cytoplasm. It localises to the cytosol. It catalyses the reaction S-ubiquitinyl-[E2 ubiquitin-conjugating enzyme]-L-cysteine + [acceptor protein]-L-lysine = [E2 ubiquitin-conjugating enzyme]-L-cysteine + N(6)-ubiquitinyl-[acceptor protein]-L-lysine.. Its function is as follows. Possesses E3 ubiquitin-protein ligase activity in vitro when associated with the E2 enzyme UBC8 in vitro. Plays combinatory roles with AIRP1 in the positive regulation of the abscisic acid-mediated drought stress response. Plays a positive role in abscisic acid- and high salinity-regulated seed germination through the ubiquitin-proteasome-dependent down-regulation of ATP1/SDIRIP1. In Arabidopsis thaliana (Mouse-ear cress), this protein is E3 ubiquitin-protein ligase AIRP2.